A 108-amino-acid chain; its full sequence is UPF0145 protein gll1048 (108 aa).

Belongs to the UPF0145 family.

The protein is UPF0145 protein gll1048 of Gloeobacter violaceus (strain ATCC 29082 / PCC 7421).